Here is a 325-residue protein sequence, read N- to C-terminus: Beta-ketoacyl-[acyl-carrier-protein] synthase III (325 aa).

Catalysis depends on residues Cys119 and His252. The segment at 253–257 (QANIR) is ACP-binding. Asn282 is an active-site residue.

This sequence belongs to the thiolase-like superfamily. FabH family. In terms of assembly, homodimer.

The protein localises to the cytoplasm. It carries out the reaction malonyl-[ACP] + acetyl-CoA + H(+) = 3-oxobutanoyl-[ACP] + CO2 + CoA. It functions in the pathway lipid metabolism; fatty acid biosynthesis. Catalyzes the condensation reaction of fatty acid synthesis by the addition to an acyl acceptor of two carbons from malonyl-ACP. Catalyzes the first condensation reaction which initiates fatty acid synthesis and may therefore play a role in governing the total rate of fatty acid production. Possesses both acetoacetyl-ACP synthase and acetyl transacylase activities. Its substrate specificity determines the biosynthesis of branched-chain and/or straight-chain of fatty acids. The polypeptide is Beta-ketoacyl-[acyl-carrier-protein] synthase III (Variovorax paradoxus (strain S110)).